The chain runs to 565 residues: Zinc finger protein 143 (565 aa).

7 consecutive C2H2-type zinc fingers follow at residues 230-254, 260-284, 290-314, 320-344, 350-374, 380-404, and 410-433; these read FRCD…ERSH, YQCD…VRTH, YRCS…VRTH, FKCP…IRTH, YYCS…VRIH, YVCT…HVVH, and YNCN…RTAH.

The protein belongs to the GLI C2H2-type zinc-finger protein family.

It localises to the nucleus. In terms of biological role, transcriptional activator. Activates the gene for selenocysteine tRNA (tRNAsec). Binds to the activator element (AE) motif of the selenocysteine tRNA gene promoter. This Xenopus laevis (African clawed frog) protein is Zinc finger protein 143 (znf143).